The following is a 116-amino-acid chain: Protein Rev (116 aa).

Residues Ser-5 and Ser-8 each carry the phosphoserine; by host CK2 modification. Residues Tyr-18 to Asn-26 form a homomultimerization region. The segment at Asn-26–Arg-48 is disordered. The Nuclear localization signal and RNA-binding (RRE) motif lies at Thr-34–Arg-50. The span at Gln-36–Arg-48 shows a compositional bias: basic residues. The Nuclear export signal and binding to XPO1 motif lies at Leu-73–Asn-84. The interval Cys-89–Glu-116 is disordered. Residues Gly-98–Glu-116 show a composition bias toward polar residues. Phosphoserine; by host is present on Ser-99.

It belongs to the HIV-1 REV protein family. In terms of assembly, homomultimer; when bound to the RRE. Multimeric assembly is essential for activity and may involve XPO1. Binds to human KPNB1, XPO1, TNPO1, RANBP5 and IPO7. Interacts with the viral Integrase. Interacts with human KHDRBS1. Interacts with human NAP1; this interaction decreases Rev multimerization and stimulates its activity. Interacts with human DEAD-box helicases DDX3 and DDX24; these interactions may serve for viral RNA export to the cytoplasm and packaging, respectively. Interacts with human PSIP1; this interaction may inhibit HIV-1 DNA integration by promoting dissociation of the Integrase-LEDGF/p75 complex. Post-translationally, asymmetrically arginine dimethylated at one site by host PRMT6. Methylation impairs the RNA-binding activity and export of viral RNA from the nucleus to the cytoplasm. Phosphorylated by protein kinase CK2. Presence of, and maybe binding to the N-terminus of the regulatory beta subunit of CK2 is necessary for CK2-mediated Rev's phosphorylation.

The protein resides in the host nucleus. The protein localises to the host nucleolus. It is found in the host cytoplasm. Its function is as follows. Escorts unspliced or incompletely spliced viral pre-mRNAs (late transcripts) out of the nucleus of infected cells. These pre-mRNAs carry a recognition sequence called Rev responsive element (RRE) located in the env gene, that is not present in fully spliced viral mRNAs (early transcripts). This function is essential since most viral proteins are translated from unspliced or partially spliced pre-mRNAs which cannot exit the nucleus by the pathway used by fully processed cellular mRNAs. Rev itself is translated from a fully spliced mRNA that readily exits the nucleus. Rev's nuclear localization signal (NLS) binds directly to KPNB1/Importin beta-1 without previous binding to KPNA1/Importin alpha-1. KPNB1 binds to the GDP bound form of RAN (Ran-GDP) and targets Rev to the nucleus. In the nucleus, the conversion from Ran-GDP to Ran-GTP dissociates Rev from KPNB1 and allows Rev's binding to the RRE in viral pre-mRNAs. Rev multimerization on the RRE via cooperative assembly exposes its nuclear export signal (NES) to the surface. Rev can then form a complex with XPO1/CRM1 and Ran-GTP, leading to nuclear export of the complex. Conversion from Ran-GTP to Ran-GDP mediates dissociation of the Rev/RRE/XPO1/RAN complex, so that Rev can return to the nucleus for a subsequent round of export. Beside KPNB1, also seems to interact with TNPO1/Transportin-1, RANBP5/IPO5 and IPO7/RANBP7 for nuclear import. The nucleoporin-like HRB/RIP is an essential cofactor that probably indirectly interacts with Rev to release HIV RNAs from the perinuclear region to the cytoplasm. The polypeptide is Protein Rev (Homo sapiens (Human)).